Reading from the N-terminus, the 245-residue chain is Thymidylate kinase (245 aa).

55–62 (GIDGVGKS) serves as a coordination point for ATP.

The protein belongs to the thymidylate kinase family.

It catalyses the reaction dTMP + ATP = dTDP + ADP. Its function is as follows. Phosphorylation of dTMP to form dTDP in both de novo and salvage pathways of dTTP synthesis. In Rhodopirellula baltica (strain DSM 10527 / NCIMB 13988 / SH1), this protein is Thymidylate kinase.